We begin with the raw amino-acid sequence, 59 residues long: Large ribosomal subunit protein bL32 (59 aa).

It belongs to the bacterial ribosomal protein bL32 family.

The sequence is that of Large ribosomal subunit protein bL32 from Limosilactobacillus reuteri (strain DSM 20016) (Lactobacillus reuteri).